Here is a 511-residue protein sequence, read N- to C-terminus: TNF receptor-associated factor family protein DDB_G0290931 (511 aa).

The RING-type; degenerate zinc finger occupies 27–67; it reads CPICFELIYKKSIYQCSSGHYACQECWEKSLEIKQECMICR. Positions 103–169 form a coiled coil; the sequence is IDGANQENED…RKLIKDEENG (67 aa). Positions 107–159 are disordered; it reads NQENEDEENEDEENEDDEDENEDEENGEDDEDKDEDEENENENEENKDEENEK. The span at 109-155 shows a compositional bias: acidic residues; it reads ENEDEENEDEENEDDEDENEDEENGEDDEDKDEDEENENENEENKDE. 2 TRAF-type zinc fingers span residues 181 to 234 and 236 to 293; these read RHIQ…QVQL and NHYD…SELQ. Positions 324 to 358 form a coiled coil; that stretch reads ELLLKEIEKSKITCSELQRKNDELSSLITEIDDNY. The region spanning 374 to 499 is the MATH domain; it reads GYTNKWIISN…DDKLTINIYV (126 aa).

Belongs to the TNF receptor-associated factor family. A subfamily.

It localises to the cytoplasm. Probable adapter protein and signal transducer that links members of the tumor necrosis factor receptor family to different signaling pathways by association with the receptor cytoplasmic domain and kinases. The protein is TNF receptor-associated factor family protein DDB_G0290931 of Dictyostelium discoideum (Social amoeba).